Here is a 1403-residue protein sequence, read N- to C-terminus: E3 ubiquitin-protein ligase SNT2 (1403 aa).

The segment at 40–62 (SGAKTKGSNSQTPRNCKRTSNPA) is disordered. Over residues 45–62 (KGSNSQTPRNCKRTSNPA) the composition is skewed to polar residues. In terms of domain architecture, BAH spans 121–258 (VLLSANDTIY…RYTLKYYKVY (138 aa)). A PHD-type 1 zinc finger spans residues 317–369 (DKRCQFCKEWCIQKESLSCDECGVCAHLYCMDPPLDRKPNKDVVWTCFSCLQK). The 52-residue stretch at 555-606 (LKEPSFTAVEIRKFEEAVEKFGSELRPVCEYVGTQPMSMIVRFYYNWKKTER) folds into the SANT domain. The PHD-type 2 zinc-finger motif lies at 1038–1097 (RTFCSVCKEKFNDNDNYEVVCGNCGLTVHYFCYAIKLPKDMKKNTNLKTFKWLCDPCSND). An RING-type; degenerate zinc finger spans residues 1041–1095 (CSVCKEKFNDNDNYEVVCGNCGLTVHYFCYAIKLPKDMKKNTNLKTFKWLCDPCS). The segment at 1105–1153 (TYQCSMCPTKDYDYDRYRSQSFKICPDALKCTSLGTWVHLVCSLFNEDI) adopts a C2HC pre-PHD-type zinc-finger fold. Residues 1177 to 1231 (FTCGVCRINGGGLVKCNKCQYRYHITCAQNSSNFKLMFEKKNMSVDTTLPCIKDV) form a PHD-type 3; degenerate zinc finger.

Component of the Snt2C complex composed of SNT2, ECM5 and RPD3. Interacts with the E2 ubiquitin-conjugating enzyme UBC4 and histones H3 and H4. Binding is enhanced to methylated histone H3K36me3.

It localises to the cytoplasm. Its subcellular location is the nucleus. The enzyme catalyses S-ubiquitinyl-[E2 ubiquitin-conjugating enzyme]-L-cysteine + [acceptor protein]-L-lysine = [E2 ubiquitin-conjugating enzyme]-L-cysteine + N(6)-ubiquitinyl-[acceptor protein]-L-lysine.. In terms of biological role, transcriptional regulator that, together with ECM5, recruits histone deacetylase RPD3 to a small number of promoters of stress-response genes in response to oxidative stress. Probable ubiquitin-protein ligase involved in the degradation-related ubiquitination of histones. Contributes to the post-translational regulation of histone protein levels by polyubiquitination of excess histones for subsequent degradation. The sequence is that of E3 ubiquitin-protein ligase SNT2 from Saccharomyces cerevisiae (strain ATCC 204508 / S288c) (Baker's yeast).